A 287-amino-acid chain; its full sequence is Sulfofructosephosphate aldolase (287 aa).

Catalysis depends on Asp-82, which acts as the Proton donor. Residues His-83 and His-180 each coordinate Zn(2+). Dihydroxyacetone phosphate is bound at residue Gly-181. Residue His-208 coordinates Zn(2+). Residues 209–211 and 230–233 each bind dihydroxyacetone phosphate; these read GGS and NVDT.

It belongs to the class II fructose-bisphosphate aldolase family. Zn(2+) serves as cofactor.

It carries out the reaction 6-deoxy-6-sulfo-D-fructose 1-phosphate = (2S)-3-sulfolactaldehyde + dihydroxyacetone phosphate. In terms of biological role, part of the sulfo-EMP2 pathway, a D-sulfoquinovose degradation pathway that produces sulfolactate (SL). Cleaves 6-deoxy-6-sulfo-D-fructose 1-phosphate (SFP) to form dihydroxyacetone phosphate (DHAP) and 3-sulfolactaldehyde (SLA). The chain is Sulfofructosephosphate aldolase from Alkalicoccus urumqiensis (Bacillus urumqiensis).